The sequence spans 528 residues: Protein DA1-related 2 (528 aa).

The segment at 60–108 (SNGGGSGAHTNHHPPQFQEDENMVFPLPPSSLDDRSRGARDKEELDRSI) is disordered. Over residues 91–106 (LDDRSRGARDKEELDR) the composition is skewed to basic and acidic residues. The UIM 1 domain occupies 99-118 (RDKEELDRSISLSLADNTKR). The region spanning 127–148 (DNNRDFPRPFHGGLNPSSFIPP) is the UIM 2; degenerate domain. An LIM zinc-binding domain is found at 160–220 (RICGGCNSDI…KLCFKELTHP (61 aa)). The segment at 447–474 (DPSTRNLPSTSSVATSSSSSFSNKKGGK) is disordered. Low complexity predominate over residues 455–470 (STSSVATSSSSSFSNK).

Interacts with ubiquitin, TCP14 and TCP15. In terms of processing, polyubiquitinated by DA2. Expressed in the vasculature of leaves, inflorescence stems, flowers, hypocotyls, and primary and lateral roots. In roots, expressed in phloem companion cells.

Acts redundantly with DA1 and DAR1 to regulate endoreduplication during leaf development. Together with DA1 and DAR1, modulates the protein stability of the transcription factors TCP14 and TCP15, which repress endoreduplication by directly regulating the expression of cell-cycle genes. Involved in root phloem development. Is an essential component of early phloem development, long-distance delivery of phloem content, and proper maintenance of root system architecture. Involved in the control of root meristem size. Functions genetically downstream of cytokinin and IAA3 to maintain normal auxin distribution by influencing polar auxin transport. Acts through the PLETHORA pathway, upstream of PLT1 and PLT2 to influence root stem cell niche activity and thus control root meristem size. In Arabidopsis thaliana (Mouse-ear cress), this protein is Protein DA1-related 2.